A 247-amino-acid polypeptide reads, in one-letter code: Carboxy-S-adenosyl-L-methionine synthase (247 aa).

S-adenosyl-L-methionine is bound by residues Tyr-39, 89-90, 117-118, Asn-132, and Arg-199; these read DN and DI.

The protein belongs to the class I-like SAM-binding methyltransferase superfamily. Cx-SAM synthase family. Homodimer.

It catalyses the reaction prephenate + S-adenosyl-L-methionine = carboxy-S-adenosyl-L-methionine + 3-phenylpyruvate + H2O. In terms of biological role, catalyzes the conversion of S-adenosyl-L-methionine (SAM) to carboxy-S-adenosyl-L-methionine (Cx-SAM). The protein is Carboxy-S-adenosyl-L-methionine synthase of Sodalis glossinidius (strain morsitans).